The sequence spans 265 residues: Tryptophan synthase alpha chain (265 aa).

Residues Glu49 and Asp60 each act as proton acceptor in the active site.

Belongs to the TrpA family. In terms of assembly, tetramer of two alpha and two beta chains.

It carries out the reaction (1S,2R)-1-C-(indol-3-yl)glycerol 3-phosphate + L-serine = D-glyceraldehyde 3-phosphate + L-tryptophan + H2O. The protein operates within amino-acid biosynthesis; L-tryptophan biosynthesis; L-tryptophan from chorismate: step 5/5. The alpha subunit is responsible for the aldol cleavage of indoleglycerol phosphate to indole and glyceraldehyde 3-phosphate. The sequence is that of Tryptophan synthase alpha chain from Cupriavidus metallidurans (strain ATCC 43123 / DSM 2839 / NBRC 102507 / CH34) (Ralstonia metallidurans).